The sequence spans 434 residues: Trigger factor (434 aa).

The PPIase FKBP-type domain maps to 160–245 (GDKAKINFVG…LNEVQAANLP (86 aa)).

The protein belongs to the FKBP-type PPIase family. Tig subfamily.

It localises to the cytoplasm. The enzyme catalyses [protein]-peptidylproline (omega=180) = [protein]-peptidylproline (omega=0). Its function is as follows. Involved in protein export. Acts as a chaperone by maintaining the newly synthesized protein in an open conformation. Functions as a peptidyl-prolyl cis-trans isomerase. In Shewanella woodyi (strain ATCC 51908 / MS32), this protein is Trigger factor.